Consider the following 1369-residue polypeptide: Neurofascin (1369 aa).

A signal peptide spans Met1–Ala25. Residues Ile26–Trp1235 lie on the Extracellular side of the membrane. Ig-like C2-type domains are found at residues Pro42–Ser138 and Pro144–Thr231. Disulfide bonds link Cys64-Cys119 and Cys163-Cys214. Residues Asn241, Asn247, and Asn323 are each glycosylated (N-linked (GlcNAc...) asparagine). Ig-like C2-type domains follow at residues Pro262–Arg350, Pro355–Ser442, Pro448–Glu535, and Pro539–Thr626. 2 cysteine pairs are disulfide-bonded: Cys286-Cys334 and Cys376-Cys426. 3 N-linked (GlcNAc...) asparagine glycosylation sites follow: Asn427, Asn464, and Asn501. Cystine bridges form between Cys470–Cys519 and Cys561–Cys610. 4 Fibronectin type-III domains span residues Arg645–Ala740, Asn745–Asp838, Ala843–Gly945, and Ser949–Ser1057. Residue Asn692 is glycosylated (N-linked (GlcNAc...) asparagine). A compositionally biased stretch (polar residues) spans Met730–Gly739. Residues Met730–Gly753 form a disordered region. 5 N-linked (GlcNAc...) asparagine glycosylation sites follow: Asn767, Asn793, Asn853, Asn994, and Asn1009. The interval Thr1078–Pro1097 is disordered. N-linked (GlcNAc...) asparagine glycosylation is found at Asn1133, Asn1150, Asn1156, and Asn1171. In terms of domain architecture, Fibronectin type-III 5 spans Asn1133–Ala1222. A helical transmembrane segment spans residues Phe1236–Ile1256. Residues Lys1257–Ala1369 lie on the Cytoplasmic side of the membrane. Composition is skewed to basic and acidic residues over residues Val1266–Glu1282 and Arg1289–Lys1298. Residues Val1266–Ala1369 form a disordered region. Polar residues predominate over residues Leu1300–Gln1313.

This sequence belongs to the immunoglobulin superfamily. L1/neurofascin/NgCAM family. N-glycosylated and O-glycosylated. Post-translationally, may be proteolytically cleaved at Arg-636.

Its subcellular location is the cell membrane. Functionally, cell adhesion, ankyrin-binding protein which may be involved in neurite extension, axonal guidance, synaptogenesis, myelination and neuron-glial cell interactions. In Gallus gallus (Chicken), this protein is Neurofascin (NFASC).